The chain runs to 298 residues: Putative ankyrin repeat-containing protein TP_0502 (298 aa).

ANK repeat units lie at residues 143–172, 176–205, 210–239, and 243–272; these read CFEE…SAAL, RGTP…PVDQ, RAYS…DPNV, and NGQT…NPYL.

The protein is Putative ankyrin repeat-containing protein TP_0502 of Treponema pallidum (strain Nichols).